Consider the following 314-residue polypeptide: Aspartate carbamoyltransferase catalytic subunit (314 aa).

Residues Arg-64 and Thr-65 each contribute to the carbamoyl phosphate site. Lys-92 is an L-aspartate binding site. Carbamoyl phosphate-binding residues include Arg-114, His-142, and Gln-145. L-aspartate-binding residues include Arg-175 and Arg-230. The carbamoyl phosphate site is built by Gly-271 and Pro-272.

It belongs to the aspartate/ornithine carbamoyltransferase superfamily. ATCase family. Heterododecamer (2C3:3R2) of six catalytic PyrB chains organized as two trimers (C3), and six regulatory PyrI chains organized as three dimers (R2).

The catalysed reaction is carbamoyl phosphate + L-aspartate = N-carbamoyl-L-aspartate + phosphate + H(+). The protein operates within pyrimidine metabolism; UMP biosynthesis via de novo pathway; (S)-dihydroorotate from bicarbonate: step 2/3. Catalyzes the condensation of carbamoyl phosphate and aspartate to form carbamoyl aspartate and inorganic phosphate, the committed step in the de novo pyrimidine nucleotide biosynthesis pathway. This is Aspartate carbamoyltransferase catalytic subunit from Deinococcus radiodurans (strain ATCC 13939 / DSM 20539 / JCM 16871 / CCUG 27074 / LMG 4051 / NBRC 15346 / NCIMB 9279 / VKM B-1422 / R1).